The following is a 259-amino-acid chain: Phosphate import ATP-binding protein PstB (259 aa).

In terms of domain architecture, ABC transporter spans 5–248 (IEVNDLNVYY…NIIFSNPSAQ (244 aa)). 37-44 (GPSGCGKS) provides a ligand contact to ATP.

This sequence belongs to the ABC transporter superfamily. Phosphate importer (TC 3.A.1.7) family. The complex is composed of two ATP-binding proteins (PstB), two transmembrane proteins (PstC and PstA) and a solute-binding protein (PstS).

It localises to the cell membrane. It catalyses the reaction phosphate(out) + ATP + H2O = ADP + 2 phosphate(in) + H(+). Its function is as follows. Part of the ABC transporter complex PstSACB involved in phosphate import. Responsible for energy coupling to the transport system. The polypeptide is Phosphate import ATP-binding protein PstB (Leifsonia xyli subsp. xyli (strain CTCB07)).